The following is a 355-amino-acid chain: Cyanide hydratase (355 aa).

Positions 6-285 (YKAAAVTSEP…DGLLFVDIDL (280 aa)) constitute a CN hydrolase domain. Glutamate 46 functions as the Proton acceptor in the catalytic mechanism. The active site involves lysine 128. The Nucleophile role is filled by cysteine 163.

It belongs to the carbon-nitrogen hydrolase superfamily. Nitrilase family. As to quaternary structure, oligomer of dimers, forming left-handed helical fibers.

The catalysed reaction is formamide = hydrogen cyanide + H2O. Its function is as follows. Catalyzes the hydration of cyanide to formamide. Degradation of cyanide may be important for plant pathogenic fungi in infection of cyanogenic plants. In Gibberella zeae (strain ATCC MYA-4620 / CBS 123657 / FGSC 9075 / NRRL 31084 / PH-1) (Wheat head blight fungus), this protein is Cyanide hydratase.